The primary structure comprises 327 residues: tRNA(Ile)-lysidine synthase (327 aa).

Position 32 to 37 (32 to 37 (SGGQDS)) interacts with ATP.

It belongs to the tRNA(Ile)-lysidine synthase family.

The protein resides in the cytoplasm. It catalyses the reaction cytidine(34) in tRNA(Ile2) + L-lysine + ATP = lysidine(34) in tRNA(Ile2) + AMP + diphosphate + H(+). Its function is as follows. Ligates lysine onto the cytidine present at position 34 of the AUA codon-specific tRNA(Ile) that contains the anticodon CAU, in an ATP-dependent manner. Cytidine is converted to lysidine, thus changing the amino acid specificity of the tRNA from methionine to isoleucine. This is tRNA(Ile)-lysidine synthase from Synechococcus sp. (strain JA-2-3B'a(2-13)) (Cyanobacteria bacterium Yellowstone B-Prime).